The sequence spans 444 residues: CRAL-TRIO domain-containing protein C3H8.02 (444 aa).

At Ser40 the chain carries Phosphoserine. Phosphothreonine is present on Thr43. Residue Ser81 is modified to Phosphoserine. The CRAL-TRIO domain maps to 171–330 (DDDFVRQLRI…EFGGPNPWRY (160 aa)). Thr418 is modified (phosphothreonine).

This chain is CRAL-TRIO domain-containing protein C3H8.02, found in Schizosaccharomyces pombe (strain 972 / ATCC 24843) (Fission yeast).